We begin with the raw amino-acid sequence, 238 residues long: 3-dehydroquinate dehydratase (238 aa).

3-dehydroquinate is bound by residues 35 to 37 (ELR) and R70. H133 functions as the Proton donor/acceptor in the catalytic mechanism. The active-site Schiff-base intermediate with substrate is K160. Residues R202 and Q225 each coordinate 3-dehydroquinate.

This sequence belongs to the type-I 3-dehydroquinase family. In terms of assembly, homodimer.

The enzyme catalyses 3-dehydroquinate = 3-dehydroshikimate + H2O. It functions in the pathway metabolic intermediate biosynthesis; chorismate biosynthesis; chorismate from D-erythrose 4-phosphate and phosphoenolpyruvate: step 3/7. Functionally, involved in the third step of the chorismate pathway, which leads to the biosynthesis of aromatic amino acids. Catalyzes the cis-dehydration of 3-dehydroquinate (DHQ) and introduces the first double bond of the aromatic ring to yield 3-dehydroshikimate. This Staphylococcus aureus (strain USA300) protein is 3-dehydroquinate dehydratase.